The sequence spans 75 residues: uncharacterized protein (75 aa).

A signal peptide spans 1 to 19 (MKKTAAIISACMLTFALSA). C20 carries the N-palmitoyl cysteine lipid modification. A lipid anchor (S-diacylglycerol cysteine) is attached at C20.

To E.coli YgdR.

It is found in the cell membrane. This is an uncharacterized protein from Escherichia coli O6:H1 (strain CFT073 / ATCC 700928 / UPEC).